The sequence spans 466 residues: Delta-1 crystallin (466 aa).

Ala2 carries the post-translational modification Blocked amino end (Ala).

The protein belongs to the lyase 1 family. Argininosuccinate lyase subfamily. As to quaternary structure, homotetramer. Post-translationally, the N-terminus is blocked. As to expression, eye lens.

Its function is as follows. Delta crystallin, the principal crystallin in embryonic lens, is found only in birds and reptiles. This Gallus gallus (Chicken) protein is Delta-1 crystallin (ASL1).